The following is a 578-amino-acid chain: Proline--tRNA ligase (578 aa).

Belongs to the class-II aminoacyl-tRNA synthetase family. ProS type 1 subfamily. Homodimer.

Its subcellular location is the cytoplasm. The enzyme catalyses tRNA(Pro) + L-proline + ATP = L-prolyl-tRNA(Pro) + AMP + diphosphate. Its function is as follows. Catalyzes the attachment of proline to tRNA(Pro) in a two-step reaction: proline is first activated by ATP to form Pro-AMP and then transferred to the acceptor end of tRNA(Pro). As ProRS can inadvertently accommodate and process non-cognate amino acids such as alanine and cysteine, to avoid such errors it has two additional distinct editing activities against alanine. One activity is designated as 'pretransfer' editing and involves the tRNA(Pro)-independent hydrolysis of activated Ala-AMP. The other activity is designated 'posttransfer' editing and involves deacylation of mischarged Ala-tRNA(Pro). The misacylated Cys-tRNA(Pro) is not edited by ProRS. The sequence is that of Proline--tRNA ligase from Burkholderia ambifaria (strain MC40-6).